The sequence spans 1108 residues: MEISPADSLSISGAAASEVVSEPSVSSSSSSSSPNQASPNPFSNMDPAVSTATGSRYVDDDEDEEDVCRICRNPGDADNPLRYPCACSGSIKFVHQDCLLQWLNHSNARQCEVCKHPFSFSPVYADNAPSRLPFQEFVVGIAMKACHVLQFFLRLSFVLSVWLLTIPFITFWIWRLAFVRTFGEAQRLFLSHISTTVILTDCLHGFLLSASIVFIFLGATSLRDYFRHLRELGGQEERDDDVDRNGARAARRPAGQANRNLAGEGNGEDAGDQGAAVGQIARRNPENVLARLDIQAARLEAQVEQMFDGLDDADGAEDVPFDELVGMQGPVFHLVENAFTVLASNMIFLGVVIFVPFTLGRIILYHVSWLFAAARGPAVAASLHLTDTGLSLENITLKSALTAVSNLTSEGQGNGLLGQLTEMMKVNGSELNGANNTLSVATDLLKGSTVGASKLSDITTLAVGYMFIVFLVFLYLGIIALIRYAKGEPLTVGRFYGIASIVEAVPSLLRQFLAAMRHLMTMIKVAFLLVIELGVFPLMCGWWLDVCTVRMFGKTMSHRVQFLSISPLASSLVHWVVGIMYMLQISIFVSLLRGVLRPGVLYFLRDPADPNYNPFRDLIDDPVHKHARRVLLSVAVYGSLIVMLVFLPVKLAIRMAPSIFPLDISVSDPFTEIPADMLLFQICIPFIIEHFRLRTTIKSLLRCWFTGVGWALGLTDFLLPRPEDNIGQDNGNGEPGRQNRAQVLQVGGPDRAMAALPVADDPNRSRLRAGNVNTGEEYEDDDEQSDSDRYNFVVRIILLLLVAWVTLLLFNSALIVVPVSLGRALFSAIPILPITHGIKCNDLYAFVIGTYAFWTTISGARYAIEHVKSKRTSVLLNQIWKWCGIVFKSSVLLAIWVFIIPVLIGLLFELLVIVPMRVPVDESPVFLLYQDWALGLIFLKIWTRLVMLDHMLPIVDDSWRAKFERVREDGFSRLQGLWVLREIVFPIVMKLLTALCVPYVLARGVFPMLGYPLVVNSAVYRFAWIGCLSVSLFCFCAKRCHVWFRNLHNSIRDDRYLIGRRLHNFGEAALANQNQNQSSEDAGDGVLIGREGDVDNGLRLRRAIQQEA.

The tract at residues 1–60 (MEISPADSLSISGAAASEVVSEPSVSSSSSSSSPNQASPNPFSNMDPAVSTATGSRYVDD) is disordered. Positions 10-44 (SISGAAASEVVSEPSVSSSSSSSSPNQASPNPFSN) are enriched in low complexity. The segment at 60 to 121 (DDEDEEDVCR…EVCKHPFSFS (62 aa)) adopts an RING-CH-type zinc-finger fold. Zn(2+)-binding residues include C68, C71, C85, C87, H95, C98, C111, and C114. 2 consecutive transmembrane segments (helical) span residues 157–177 (FVLSVWLLTIPFITFWIWRLA) and 197–217 (VILTDCLHGFLLSASIVFIFL). Residues 237 to 246 (ERDDDVDRNG) are compositionally biased toward basic and acidic residues. Residues 237–273 (ERDDDVDRNGARAARRPAGQANRNLAGEGNGEDAGDQ) form a disordered region. Residues 286–308 (ENVLARLDIQAARLEAQVEQMFD) adopt a coiled-coil conformation. 8 consecutive transmembrane segments (helical) span residues 339 to 359 (FTVLASNMIFLGVVIFVPFTL), 362 to 382 (IILYHVSWLFAAARGPAVAAS), 462 to 482 (AVGYMFIVFLVFLYLGIIALI), 489 to 509 (PLTVGRFYGIASIVEAVPSLL), 525 to 545 (VAFLLVIELGVFPLMCGWWLD), 572 to 592 (LVHWVVGIMYMLQISIFVSLL), 630 to 650 (VLLSVAVYGSLIVMLVFLPVK), and 669 to 689 (PFTEIPADMLLFQICIPFIIE). The interval 762-784 (PNRSRLRAGNVNTGEEYEDDDEQ) is disordered. The next 6 membrane-spanning stretches (helical) occupy residues 796–816 (IILLLLVAWVTLLLFNSALIV), 844–864 (YAFVIGTYAFWTTISGARYAI), 894–914 (AIWVFIIPVLIGLLFELLVIV), 923–943 (SPVFLLYQDWALGLIFLKIWT), 982–1002 (EIVFPIVMKLLTALCVPYVLA), and 1017–1036 (SAVYRFAWIGCLSVSLFCFC).

In terms of tissue distribution, expressed in cotyledons, leaves, roots, stems, inflorescences and siliques. Expression higher at the top than at the base of the stem.

The protein resides in the membrane. The enzyme catalyses S-ubiquitinyl-[E2 ubiquitin-conjugating enzyme]-L-cysteine + [acceptor protein]-L-lysine = [E2 ubiquitin-conjugating enzyme]-L-cysteine + N(6)-ubiquitinyl-[acceptor protein]-L-lysine.. Its pathway is protein modification; protein ubiquitination. Probable E3 ubiquitin ligase acting as a positive post-transcriptional regulator of 3-hydroxy-3-methylglutaryl-coenzyme A reductase activity. Might be involved in the quality control that degrades misfolded proteins. This chain is Probable E3 ubiquitin ligase SUD1 (SUD1), found in Arabidopsis thaliana (Mouse-ear cress).